A 207-amino-acid chain; its full sequence is Large ribosomal subunit protein uL4 (207 aa).

Residues Lys52–Gln75 form a disordered region. A compositionally biased stretch (basic residues) spans Gly60 to Gly71.

It belongs to the universal ribosomal protein uL4 family. Part of the 50S ribosomal subunit.

In terms of biological role, one of the primary rRNA binding proteins, this protein initially binds near the 5'-end of the 23S rRNA. It is important during the early stages of 50S assembly. It makes multiple contacts with different domains of the 23S rRNA in the assembled 50S subunit and ribosome. Its function is as follows. Forms part of the polypeptide exit tunnel. The chain is Large ribosomal subunit protein uL4 from Limosilactobacillus fermentum (strain NBRC 3956 / LMG 18251) (Lactobacillus fermentum).